A 748-amino-acid polypeptide reads, in one-letter code: Rho GTPase-activating protein 24 (748 aa).

In terms of domain architecture, PH spans 18 to 124 (NATKCGWLRK…WVKSIRRVIW (107 aa)). The Rho-GAP domain maps to 134–328 (QKLEDTVRYE…VMISKHDRLF (195 aa)). The disordered stretch occupies residues 328–476 (FPKDTEPQSK…SSGTKMGTHS (149 aa)). 2 stretches are compositionally biased toward polar residues: residues 335-347 (QSKP…SNNN) and 356-368 (GQLQ…NTKE). A phosphoserine mark is found at Ser-369, Ser-391, Ser-396, Ser-398, Ser-402, Ser-413, Ser-415, and Ser-437. The segment covering 369–381 (SPVRRCSWDKPES) has biased composition (basic and acidic residues). The span at 382–405 (PQRSSMDNGSPTALSGSKTNSPRN) shows a compositional bias: polar residues. A compositionally biased stretch (polar residues) spans 432-476 (IVTNGSFSSSNAEGVEKTQTTPNGSLQARRTSSLKSSGTKMGTHS). Thr-452 bears the Phosphothreonine mark. Ser-495 bears the Phosphoserine mark. Residues 582–640 (DFYGGNFEDPVLDGPPQDDLSHPGDYENKSDRRSVGGRSSRATSSSDNSETFVGNTSSN) are disordered. The segment covering 600 to 615 (DLSHPGDYENKSDRRS) has biased composition (basic and acidic residues). Low complexity predominate over residues 617–630 (GGRSSRATSSSDNS). The segment covering 631 to 640 (ETFVGNTSSN) has biased composition (polar residues). A coiled-coil region spans residues 649–729 (SSLKQEMTKQ…KEMEQFFSTF (81 aa)).

In terms of assembly, interacts with FLNA. Phosphorylated by ROCK, leading to activate the RacGAP activity.

It localises to the cytoplasm. It is found in the cytoskeleton. The protein localises to the cell junction. The protein resides in the adherens junction. Its subcellular location is the focal adhesion. It localises to the cell projection. Rho GTPase-activating protein involved in cell polarity, cell morphology and cytoskeletal organization. Acts as a GTPase activator for the Rac-type GTPase by converting it to an inactive GDP-bound state. Controls actin remodeling by inactivating Rac downstream of Rho leading to suppress leading edge protrusion and promotes cell retraction to achieve cellular polarity. Able to suppress RAC1 and CDC42 activity in vitro. Overexpression induces cell rounding with partial or complete disruption of actin stress fibers and formation of membrane ruffles, lamellipodia, and filopodia. Isoform 2 is a vascular cell-specific GAP involved in modulation of angiogenesis. In Rattus norvegicus (Rat), this protein is Rho GTPase-activating protein 24 (Arhgap24).